The chain runs to 225 residues: Uracil-DNA glycosylase (225 aa).

The active-site Proton acceptor is Asp65.

It belongs to the uracil-DNA glycosylase (UDG) superfamily. UNG family.

It localises to the cytoplasm. It catalyses the reaction Hydrolyzes single-stranded DNA or mismatched double-stranded DNA and polynucleotides, releasing free uracil.. Excises uracil residues from the DNA which can arise as a result of misincorporation of dUMP residues by DNA polymerase or due to deamination of cytosine. This Bacillus cereus (strain ATCC 10987 / NRS 248) protein is Uracil-DNA glycosylase.